The chain runs to 145 residues: Deoxyuridine 5'-triphosphate nucleotidohydrolase (145 aa).

Residues 62 to 64 (RSG), N75, 79 to 81 (TVD), and K89 contribute to the substrate site.

It belongs to the dUTPase family. The cofactor is Mg(2+).

It catalyses the reaction dUTP + H2O = dUMP + diphosphate + H(+). The protein operates within pyrimidine metabolism; dUMP biosynthesis; dUMP from dCTP (dUTP route): step 2/2. Functionally, this enzyme is involved in nucleotide metabolism: it produces dUMP, the immediate precursor of thymidine nucleotides and it decreases the intracellular concentration of dUTP so that uracil cannot be incorporated into DNA. This is Deoxyuridine 5'-triphosphate nucleotidohydrolase from Helicobacter pylori (strain Shi470).